Here is a 623-residue protein sequence, read N- to C-terminus: MTSTYTRFDTVFLFSRFAGAKYSPLLPSPSFTLSTSGIHIRTKPNSRFHSIIASSSSSSVVAGTDSIEIKSLPTKPIEGQKTGTSGLRKKVKVFMEDNYLANWIQALFNSLPLEDYKNATLVLGGDGRYFNKEASQIIIKIAAGNGVGQILVGKEGILSTPAVSAVIRKRKANGGFIMSASHNPGGPEYDWGIKFNYSSGQPAPETITDKIYGNTLSISEIKVAEIPDIDLSQVGVTKYGNFSVEVIDPVSDYLELMEDVFDFDLIRGLLSRSDFGFMFDAMHAVTGAYAKPIFVDNLGAKPDSISNGVPLEDFGHGHPDPNLTYAKDLVDVMYRDNGPDFGAASDGDGDRNMVLGNKFFVTPSDSVAIIAANAQEAIPYFRAGPKGLARSMPTSGALDRVAEKLKLPFFEVPTGWKFFGNLMDAGKLSICGEESFGTGSDHIREKDGIWAVLAWLSILAHRNKDTKPGDKLVSVADVVKEYWATYGRNFFSRYDYEECESEGANKMIEYLREILSKSKAGDVYGNYVLQFADDFSYTDPVDGSVASKQGVRFVFTDGSRIIFRLSGTGSAGATVRIYIEQFEPDVSKHDVDAQIALKPLIDLALSVSKLKDFTGREKPTVIT.

The N-terminal 63 residues, 1–63 (MTSTYTRFDT…SSSSSSVVAG (63 aa)), are a transit peptide targeting the chloroplast. 2 residues coordinate alpha-D-glucose 1,6-bisphosphate: Arg88 and Ser181. Ser181 functions as the Phosphoserine intermediate in the catalytic mechanism. Mg(2+)-binding residues include Ser181, Asp346, Asp348, and Asp350. Ser181 is modified (phosphoserine). The alpha-D-glucose 1,6-bisphosphate site is built by Asp350, Arg351, Thr414, Glu433, Ser435, and Lys446.

This sequence belongs to the phosphohexose mutase family. In terms of assembly, monomer. Mg(2+) is required as a cofactor. Expressed in flowers, siliques and germinating seeds.

Its subcellular location is the plastid. It is found in the chloroplast. It catalyses the reaction alpha-D-glucose 1-phosphate = alpha-D-glucose 6-phosphate. The enzyme catalyses O-phospho-L-seryl-[protein] + alpha-D-glucose 1-phosphate = alpha-D-glucose 1,6-bisphosphate + L-seryl-[protein]. The catalysed reaction is alpha-D-glucose 1,6-bisphosphate + L-seryl-[protein] = O-phospho-L-seryl-[protein] + alpha-D-glucose 6-phosphate. Inhibited by the Calvin cycle intermediates fructose-1,6-bisphosphate and ribulose-1,5-bisphosphate. Its function is as follows. Catalyzes the reversible isomerization of alpha-D-glucose 1-phosphate to alpha-D-glucose 6-phosphate. The mechanism proceeds via the intermediate compound alpha-D-glucose 1,6-bisphosphate. This enzyme participates in both the breakdown and synthesis of glucose. Factor that affects seed oil content. Accumulated starch in young embryos may play an important role in providing carbon resources for seed storage lipid biosynthesis in oilseed plants. Promotes gravitropic responses, negative in shoots but positive in roots, by facilitating starch granules (statoliths) formation in hypocotyls and roots columella. This chain is Phosphoglucomutase, chloroplastic, found in Arabidopsis thaliana (Mouse-ear cress).